Here is a 174-residue protein sequence, read N- to C-terminus: Beta-lactoglobulin (174 aa).

Residues 1–18 form the signal peptide; sequence MKFLLLTVGLALIGAIQA. Cystine bridges form between C79–C172 and C122–C134.

It belongs to the calycin superfamily. Lipocalin family. Monomer.

The protein resides in the secreted. Lactoglobulin is the primary component of whey, it binds retinol and is probably involved in the transport of that molecule. This Notamacropus eugenii (Tammar wallaby) protein is Beta-lactoglobulin (LGB).